A 345-amino-acid polypeptide reads, in one-letter code: Phosphoribosylformylglycinamidine cyclo-ligase (345 aa).

Belongs to the AIR synthase family.

The protein resides in the cytoplasm. It catalyses the reaction 2-formamido-N(1)-(5-O-phospho-beta-D-ribosyl)acetamidine + ATP = 5-amino-1-(5-phospho-beta-D-ribosyl)imidazole + ADP + phosphate + H(+). Its pathway is purine metabolism; IMP biosynthesis via de novo pathway; 5-amino-1-(5-phospho-D-ribosyl)imidazole from N(2)-formyl-N(1)-(5-phospho-D-ribosyl)glycinamide: step 2/2. This Mannheimia succiniciproducens (strain KCTC 0769BP / MBEL55E) protein is Phosphoribosylformylglycinamidine cyclo-ligase.